The following is a 132-amino-acid chain: ATP synthase epsilon chain (132 aa).

It belongs to the ATPase epsilon chain family. As to quaternary structure, F-type ATPases have 2 components, CF(1) - the catalytic core - and CF(0) - the membrane proton channel. CF(1) has five subunits: alpha(3), beta(3), gamma(1), delta(1), epsilon(1). CF(0) has three main subunits: a, b and c.

It is found in the cell membrane. Produces ATP from ADP in the presence of a proton gradient across the membrane. The polypeptide is ATP synthase epsilon chain (Desulfitobacterium hafniense (strain DSM 10664 / DCB-2)).